The sequence spans 1574 residues: Myosin-2 (1574 aa).

Ser-2 carries the N-acetylserine modification. The region spanning 4-57 (EVGTRCWYPHKELGWIGAEVIKNEFNDGKYHLELQLEDDEIVSVDTKDLNNDKD) is the Myosin N-terminal SH3-like domain. The region spanning 70-781 (EATEDLTSLS…MLAYLEKLRS (712 aa)) is the Myosin motor domain. 164–171 (GESGAGKT) is an ATP binding site. Residues 443-523 (FIGVLDIYGF…LGILSLLDEE (81 aa)) are actin-binding. IQ domains lie at 784-806 (MHNS…QYLQ), 807-831 (ISQA…NDEM), 832-855 (KVNC…VFSV), 856-879 (LRTI…KQEH), 880-902 (EYNA…RFLR), and 903-932 (TKKD…DAKS). Residues 933–1088 (VNHLKEVSYK…RLQTAMSLGT (156 aa)) are a coiled coil. Residues 1087–1574 (GTVTTSVLPQ…VAQQVVQDGH (488 aa)) are non alpha-helical, tail domain. Thr-1097 carries the post-translational modification Phosphothreonine. A Phosphoserine modification is found at Ser-1121. The region spanning 1226–1501 (AQVLTTIQKV…LRYVADIVKK (276 aa)) is the Dilute domain.

The protein belongs to the TRAFAC class myosin-kinesin ATPase superfamily. Myosin family. In terms of assembly, homodimer. Interacts with calmodulin (CMD1) and the myosin light chain MLC1 through its IQ repeats. Binds to the membrane receptors SEC4 and VAC17 to transport secretory vesicles and the vacuole, respectively. Binds to KAR9, which transports BIM1-coated cytoplasmic microtubules that are attached to the spindle pole body into the emerging bud, thereby correctly orienting the mitotic spindle. Interacts with YPT11 and MMR1 to accelerate mitochondrial distribution to the bud. Interacts with SHE4 and localizes it to the bud tip. Interacts with RHO3 and SMY1, putative regulators of MYO2 function. Interacts with SRO7.

The protein localises to the bud neck. The protein resides in the bud tip. Functionally, myosin heavy chain that is required for the cell cycle-regulated transport of various organelles and proteins for their segregation. Functions by binding with its tail domain to receptor proteins on organelles and exerting force with its N-terminal motor domain against actin filaments, thereby transporting its cargo along polarized actin cables. Essential for the delivery of secretory vesicles to sites of active growth during bud emergence and cytokinesis. Required for segregation and inheritance of peroxisomes, late Golgi compartments, mitochondria and the vacuole to the daughter cell during cell division. Also required for correct alignment of the spindle during mitosis. This chain is Myosin-2 (MYO2), found in Saccharomyces cerevisiae (strain ATCC 204508 / S288c) (Baker's yeast).